A 346-amino-acid chain; its full sequence is Protein Spea_1705 (346 aa).

Residue Cys-101 is the Proton acceptor of the active site. Residues 102–103 (GH), Asp-262, and 267–268 (GT) contribute to the substrate site.

Belongs to the proline racemase family.

It catalyses the reaction trans-3-hydroxy-L-proline = 1-pyrroline-2-carboxylate + H2O. Its function is as follows. In vitro, catalyzes the dehydration of trans-3-hydroxy-L-proline (t3LHyp) to Delta(1)-pyrroline-2-carboxylate (Pyr2C), albeit with very low efficiency. The physiological substrate may be different. Displays neither trans-4-hydroxy-L-proline (t4LHyp) epimerase nor proline racemase activity. The polypeptide is Protein Spea_1705 (Shewanella pealeana (strain ATCC 700345 / ANG-SQ1)).